Reading from the N-terminus, the 43-residue chain is Iota-conotoxin-like S11.2 (43 aa).

Cystine bridges form between cysteine 2/cysteine 16, cysteine 9/cysteine 19, cysteine 15/cysteine 24, and cysteine 18/cysteine 35. The residue at position 41 (methionine 41) is a D-methionine. Arginine 43 is a propeptide (removed by a carboxypeptidase).

This sequence belongs to the conotoxin I1 superfamily. Expressed by the venom duct.

It is found in the secreted. Functionally, iota-conotoxins bind to voltage-gated sodium channels (Nav) and act as agonists by shifting the voltage-dependence of activation to more hyperpolarized levels. Produces general excitatory symptoms. In Conus striatus (Striated cone), this protein is Iota-conotoxin-like S11.2.